A 465-amino-acid chain; its full sequence is tRNA (guanine(37)-N(1))-methyltransferase (465 aa).

The transit peptide at 1-20 (MDKNSQLRDMNLFRAPAARA) directs the protein to the mitochondrion. Residues H238 and 304 to 305 (DG) contribute to the S-adenosyl-L-methionine site. The disordered stretch occupies residues 326–345 (AVIKPPRPPRKSAAPPPEPV). Residue N359 participates in S-adenosyl-L-methionine binding.

This sequence belongs to the class I-like SAM-binding methyltransferase superfamily. TRM5/TYW2 family. In terms of assembly, monomer.

It localises to the mitochondrion matrix. The protein resides in the nucleus. It is found in the cytoplasm. The catalysed reaction is guanosine(37) in tRNA + S-adenosyl-L-methionine = N(1)-methylguanosine(37) in tRNA + S-adenosyl-L-homocysteine + H(+). Functionally, specifically methylates the N1 position of guanosine-37 in various cytoplasmic and mitochondrial tRNAs. Methylation is not dependent on the nature of the nucleoside 5' of the target nucleoside. This is the first step in the biosynthesis of wybutosine (yW), a modified base adjacent to the anticodon of tRNAs and required for accurate decoding. The protein is tRNA (guanine(37)-N(1))-methyltransferase of Fusarium vanettenii (strain ATCC MYA-4622 / CBS 123669 / FGSC 9596 / NRRL 45880 / 77-13-4) (Fusarium solani subsp. pisi).